A 139-amino-acid chain; its full sequence is Putative pre-16S rRNA nuclease (139 aa).

This sequence belongs to the YqgF nuclease family.

Its subcellular location is the cytoplasm. Functionally, could be a nuclease involved in processing of the 5'-end of pre-16S rRNA. The polypeptide is Putative pre-16S rRNA nuclease (Legionella pneumophila (strain Paris)).